A 947-amino-acid polypeptide reads, in one-letter code: Altered inheritance of mitochondria protein 3 (947 aa).

3 disordered regions span residues methionine 1–glutamine 334, methionine 354–valine 810, and arginine 824–glutamate 904. Over residues alanine 36–lysine 54 the composition is skewed to basic residues. 3 positions are modified to phosphoserine: serine 57, serine 58, and serine 64. Acidic residues predominate over residues aspartate 59–glutamate 69. Residues tyrosine 70–lysine 84 show a composition bias toward basic and acidic residues. Composition is skewed to low complexity over residues proline 93–glutamine 105 and glutamine 130–proline 163. Positions glycine 177 to glycine 255 are enriched in polar residues. Low complexity-rich tracts occupy residues glutamine 256 to glutamine 289 and glutamine 313 to glutamine 334. Polar residues predominate over residues methionine 354–tyrosine 367. Over residues glycine 379 to proline 395 the composition is skewed to pro residues. Residues isoleucine 466 to alanine 475 show a composition bias toward polar residues. Serine 476 bears the Phosphoserine mark. The span at aspartate 488–threonine 502 shows a compositional bias: basic and acidic residues. Over residues valine 633–phenylalanine 644 the composition is skewed to polar residues. Low complexity predominate over residues serine 667–serine 676. Threonine 729 carries the phosphothreonine modification. Residues aspartate 749–lysine 759 are compositionally biased toward basic and acidic residues. The segment covering proline 763–threonine 774 has biased composition (polar residues). Threonine 861 is modified (phosphothreonine). Over residues proline 862–valine 879 the composition is skewed to pro residues. The segment covering lysine 888–leucine 899 has biased composition (basic residues).

It belongs to the AIM3 family. In terms of assembly, interacts with RVS167.

The protein localises to the membrane raft. This Saccharomyces cerevisiae (strain ATCC 204508 / S288c) (Baker's yeast) protein is Altered inheritance of mitochondria protein 3 (AIM3).